Reading from the N-terminus, the 305-residue chain is Mycothiol acetyltransferase (305 aa).

N-acetyltransferase domains lie at 10 to 154 and 156 to 305; these read DRLD…VVLE and ISLR…YARA. Glu38 contributes to the 1D-myo-inositol 2-(L-cysteinylamino)-2-deoxy-alpha-D-glucopyranoside binding site. 82–84 serves as a coordination point for acetyl-CoA; that stretch reads LAV. 1D-myo-inositol 2-(L-cysteinylamino)-2-deoxy-alpha-D-glucopyranoside is bound by residues Glu183, Lys225, and Glu238. Acetyl-CoA is bound by residues 242–244 and 249–255; these read VAI and QGRGLGR. Tyr276 contacts 1D-myo-inositol 2-(L-cysteinylamino)-2-deoxy-alpha-D-glucopyranoside. Position 281-286 (281-286) interacts with acetyl-CoA; the sequence is NASALH.

Belongs to the acetyltransferase family. MshD subfamily. In terms of assembly, monomer.

The catalysed reaction is 1D-myo-inositol 2-(L-cysteinylamino)-2-deoxy-alpha-D-glucopyranoside + acetyl-CoA = mycothiol + CoA + H(+). Catalyzes the transfer of acetyl from acetyl-CoA to desacetylmycothiol (Cys-GlcN-Ins) to form mycothiol. In Rhodococcus opacus (strain B4), this protein is Mycothiol acetyltransferase.